The sequence spans 168 residues: Photosystem I assembly protein Ycf3 (168 aa).

3 TPR repeats span residues 35–68 (AFTY…EIDP), 72–105 (SYIL…NPFL), and 120–153 (GEQA…TPGN).

Belongs to the Ycf3 family.

It localises to the plastid. Its subcellular location is the chloroplast thylakoid membrane. In terms of biological role, essential for the assembly of the photosystem I (PSI) complex. May act as a chaperone-like factor to guide the assembly of the PSI subunits. The sequence is that of Photosystem I assembly protein Ycf3 from Atropa belladonna (Belladonna).